The primary structure comprises 178 residues: MRRPFRATPVQKDGPRSNRDIRVPRVQLIDAEGQNHGDVSIQEAMAMAEEAGLDLVEIVPNAEPPVCKIVDLGKLKYQNQKKAAEARKKQKTVEIKEIKMRPNIDTHDYEVKMKAAQRFFEEGDKVKVTLRFRGREMAHQELGMKLLQRVKEDTVEIAKVESEPKLEGRQMMMVLAPR.

A disordered region spans residues 1 to 20 (MRRPFRATPVQKDGPRSNRD).

It belongs to the IF-3 family. In terms of assembly, monomer.

Its subcellular location is the cytoplasm. Its function is as follows. IF-3 binds to the 30S ribosomal subunit and shifts the equilibrium between 70S ribosomes and their 50S and 30S subunits in favor of the free subunits, thus enhancing the availability of 30S subunits on which protein synthesis initiation begins. This is Translation initiation factor IF-3 from Brucella abortus biovar 1 (strain 9-941).